The primary structure comprises 790 residues: MRSVQIFLSQCRLLLLLVPTMLLKSLGEDVIFHPEGEFDSYEVTIPEKLSFRGEVQGVVSPVSYLLQLKGKKHVLHLWPKRLLLPRHLRVFSFTEHGELLEDHPYIPKDCNYMGSVKESLDSKATISTCMGGLRGVFNIDAKHYQIEPLKASPSFEHVVYLLKKEQFGNQVCGLSDDEIEWQMAPYENKARLRDFPGSYKHPKYLELILLFDQSRYRFVNNNLSQVIHDAILLTGIMDTYFQDVRMRIHLKALEVWTDFNKIRVGYPELAEVLGRFVIYKKSVLNARLSSDWAHLYLQRKYNDALAWSFGKVCSLEYAGSVSTLLDTNILAPATWSAHELGHAVGMSHDEQYCQCRGRLNCIMGSGRTGFSNCSYISFFKHISSGATCLNNIPGLGYVLKRCGNKIVEDNEECDCGSTEECQKDRCCQSNCKLQPGANCSIGLCCHDCRFRPSGYVCRQEGNECDLAEYCDGNSSSCPNDVYKQDGTPCKYEGRCFRKGCRSRYMQCQSIFGPDAMEAPSECYDAVNLIGDQFGNCEITGIRNFKKCESANSICGRLQCINVETIPDLPEHTTIISTHLQAENLMCWGTGYHLSMKPMGIPDLGMINDGTSCGEGRVCFKKNCVNSSVLQFDCLPEKCNTRGVCNNRKNCHCMYGWAPPFCEEVGYGGSIDSGPPGLLRGAIPSSIWVVSIIMFRLILLILSVVFVFFRQVIGNHLKPKQEKMPLSKAKTEQEESKTKTVQEESKTKTGQEESEAKTGQEESKAKTGQEESKANIESKRPKAKSVKKQKK.

Residues 1–27 (MRSVQIFLSQCRLLLLLVPTMLLKSLG) form the signal peptide. Positions 28–198 (EDVIFHPEGE…KARLRDFPGS (171 aa)) are excised as a propeptide. A Cysteine switch motif is present at residues 170–177 (QVCGLSDD). Residue C172 participates in Zn(2+) binding. The Extracellular portion of the chain corresponds to 199 to 687 (YKHPKYLELI…LRGAIPSSIW (489 aa)). Residues 203-393 (KYLELILLFD…SGATCLNNIP (191 aa)) form the Peptidase M12B domain. Residue N222 is glycosylated (N-linked (GlcNAc...) asparagine). 3 disulfides stabilise this stretch: C313-C388, C353-C373, and C355-C361. H338 is a binding site for Zn(2+). E339 is an active-site residue. Residues H342 and H348 each coordinate Zn(2+). N372, N438, N473, and N625 each carry an N-linked (GlcNAc...) asparagine glycan. The region spanning 399-485 (LKRCGNKIVE…SCPNDVYKQD (87 aa)) is the Disintegrin domain. C457 and C477 are oxidised to a cystine. The region spanning 629–663 (LQFDCLPEKCNTRGVCNNRKNCHCMYGWAPPFCEE) is the EGF-like domain. 3 disulfide bridges follow: C633–C644, C638–C650, and C652–C661. A helical membrane pass occupies residues 688-708 (VVSIIMFRLILLILSVVFVFF). Residues 709–790 (RQVIGNHLKP…KAKSVKKQKK (82 aa)) lie on the Cytoplasmic side of the membrane. The segment covering 720–779 (QEKMPLSKAKTEQEESKTKTVQEESKTKTGQEESEAKTGQEESKAKTGQEESKANIESKR) has biased composition (basic and acidic residues). Residues 720 to 790 (QEKMPLSKAK…KAKSVKKQKK (71 aa)) are disordered. 5 repeat units span residues 732-740 (QEESKTKTV), 741-749 (QEESKTKTG), 750-758 (QEESEAKTG), 759-767 (QEESKAKTG), and 768-776 (QEESKANIE). Residues 732–776 (QEESKTKTVQEESKTKTGQEESEAKTGQEESKAKTGQEESKANIE) form a 5 X 9 AA approximate repeats region. Residues 780–790 (PKAKSVKKQKK) show a composition bias toward basic residues.

In terms of assembly, interacts with CTSD; this leads to activation of CTSD. The cofactor is Zn(2+). As to expression, expressed in brain neurons (at protein level). Expressed in testis.

Its subcellular location is the late endosome membrane. Functionally, plays a role in lysosomal amyloid precursor protein (APP) processing by cleaving and activating CTSD/cathepsin D which leads to APP degradation. In Homo sapiens (Human), this protein is Disintegrin and metalloproteinase domain-containing protein 30 (ADAM30).